The sequence spans 205 residues: Holliday junction branch migration complex subunit RuvA (205 aa).

The interval 1 to 64 (MIGKLKGLID…EDQIKLFGFR (64 aa)) is domain I. The tract at residues 65–143 (SDVEREWFRL…AFADVDPGVI (79 aa)) is domain II. Residues 144–154 (RLSGAIEDSRA) form a flexible linker region. The domain III stretch occupies residues 154-205 (APQPIADAISALINLGYGQPQAAAAIAAASRAAGDKAETAQLIRLGLKELAK).

This sequence belongs to the RuvA family. As to quaternary structure, homotetramer. Forms an RuvA(8)-RuvB(12)-Holliday junction (HJ) complex. HJ DNA is sandwiched between 2 RuvA tetramers; dsDNA enters through RuvA and exits via RuvB. An RuvB hexamer assembles on each DNA strand where it exits the tetramer. Each RuvB hexamer is contacted by two RuvA subunits (via domain III) on 2 adjacent RuvB subunits; this complex drives branch migration. In the full resolvosome a probable DNA-RuvA(4)-RuvB(12)-RuvC(2) complex forms which resolves the HJ.

It is found in the cytoplasm. In terms of biological role, the RuvA-RuvB-RuvC complex processes Holliday junction (HJ) DNA during genetic recombination and DNA repair, while the RuvA-RuvB complex plays an important role in the rescue of blocked DNA replication forks via replication fork reversal (RFR). RuvA specifically binds to HJ cruciform DNA, conferring on it an open structure. The RuvB hexamer acts as an ATP-dependent pump, pulling dsDNA into and through the RuvAB complex. HJ branch migration allows RuvC to scan DNA until it finds its consensus sequence, where it cleaves and resolves the cruciform DNA. This is Holliday junction branch migration complex subunit RuvA from Bradyrhizobium sp. (strain BTAi1 / ATCC BAA-1182).